The chain runs to 170 residues: Crossover junction endodeoxyribonuclease RuvC (170 aa).

Active-site residues include Asp9, Glu70, and Asp145. Residues Asp9, Glu70, and Asp145 each contribute to the Mg(2+) site.

The protein belongs to the RuvC family. In terms of assembly, homodimer which binds Holliday junction (HJ) DNA. The HJ becomes 2-fold symmetrical on binding to RuvC with unstacked arms; it has a different conformation from HJ DNA in complex with RuvA. In the full resolvosome a probable DNA-RuvA(4)-RuvB(12)-RuvC(2) complex forms which resolves the HJ. Mg(2+) is required as a cofactor.

The protein localises to the cytoplasm. It catalyses the reaction Endonucleolytic cleavage at a junction such as a reciprocal single-stranded crossover between two homologous DNA duplexes (Holliday junction).. Functionally, the RuvA-RuvB-RuvC complex processes Holliday junction (HJ) DNA during genetic recombination and DNA repair. Endonuclease that resolves HJ intermediates. Cleaves cruciform DNA by making single-stranded nicks across the HJ at symmetrical positions within the homologous arms, yielding a 5'-phosphate and a 3'-hydroxyl group; requires a central core of homology in the junction. The consensus cleavage sequence is 5'-(A/T)TT(C/G)-3'. Cleavage occurs on the 3'-side of the TT dinucleotide at the point of strand exchange. HJ branch migration catalyzed by RuvA-RuvB allows RuvC to scan DNA until it finds its consensus sequence, where it cleaves and resolves the cruciform DNA. This is Crossover junction endodeoxyribonuclease RuvC from Chlamydia trachomatis serovar A (strain ATCC VR-571B / DSM 19440 / HAR-13).